We begin with the raw amino-acid sequence, 146 residues long: Ribonuclease H (146 aa).

An RNase H type-1 domain is found at 1 to 136 (MKHIEIYTDG…CDTLAREAAL (136 aa)). The Mg(2+) site is built by D9, E47, D69, and D128.

This sequence belongs to the RNase H family. As to quaternary structure, monomer. It depends on Mg(2+) as a cofactor.

The protein resides in the cytoplasm. It carries out the reaction Endonucleolytic cleavage to 5'-phosphomonoester.. Functionally, endonuclease that specifically degrades the RNA of RNA-DNA hybrids. This is Ribonuclease H from Campylobacter jejuni subsp. jejuni serotype O:23/36 (strain 81-176).